An 80-amino-acid polypeptide reads, in one-letter code: Exodeoxyribonuclease 7 small subunit (80 aa).

This sequence belongs to the XseB family. As to quaternary structure, heterooligomer composed of large and small subunits.

It is found in the cytoplasm. The enzyme catalyses Exonucleolytic cleavage in either 5'- to 3'- or 3'- to 5'-direction to yield nucleoside 5'-phosphates.. Bidirectionally degrades single-stranded DNA into large acid-insoluble oligonucleotides, which are then degraded further into small acid-soluble oligonucleotides. The sequence is that of Exodeoxyribonuclease 7 small subunit from Phenylobacterium zucineum (strain HLK1).